A 251-amino-acid polypeptide reads, in one-letter code: Ly6/PLAUR domain-containing protein 5 (251 aa).

The N-terminal stretch at Met-1–Ala-25 is a signal peptide. Asn-120 and Asn-174 each carry an N-linked (GlcNAc...) asparagine glycan. One can recognise a UPAR/Ly6 domain in the interval Cys-135–Asn-214. Ala-225 carries the GPI-anchor amidated alanine lipid modification. Positions Ser-226–Ala-251 are cleaved as a propeptide — removed in mature form.

Its subcellular location is the cell membrane. The sequence is that of Ly6/PLAUR domain-containing protein 5 (LYPD5) from Homo sapiens (Human).